The following is a 439-amino-acid chain: CBL-interacting serine/threonine-protein kinase 26 (439 aa).

The 256-residue stretch at 13 to 268 (YEVGKTLGQG…IPEVLGDAWF (256 aa)) folds into the Protein kinase domain. ATP contacts are provided by residues 19 to 27 (LGQGTFAKV) and Lys42. The Proton acceptor role is filled by Asp136. Positions 154–183 (DFGLSALSRQVRGDGLLHTACGTPNYAAPE) are activation loop. The residue at position 158 (Ser158) is a Phosphoserine. At Thr172 the chain carries Phosphothreonine. The NAF domain maps to 306-330 (EQPTSMNAFELISMSRALDLGNLFE). Residues 336–365 (KRETRFAAKGAANDLVQKIEEASKPLGFDI) are PPI.

Belongs to the protein kinase superfamily. CAMK Ser/Thr protein kinase family. SNF1 subfamily. Interacts with RBOHF (via N-terminus). Requires Mn(2+) as cofactor.

Its subcellular location is the cell membrane. It catalyses the reaction L-seryl-[protein] + ATP = O-phospho-L-seryl-[protein] + ADP + H(+). The enzyme catalyses L-threonyl-[protein] + ATP = O-phospho-L-threonyl-[protein] + ADP + H(+). In terms of biological role, CIPK serine-threonine protein kinases interact with CBL proteins. Binding of a CBL protein to the regulatory NAF domain of CIPK protein lead to the activation of the kinase in a calcium-dependent manner. Involved in the calcium-dependent regulation of reactive oxygen species production by the NADPH oxidase RBOHF. This chain is CBL-interacting serine/threonine-protein kinase 26 (CIPK26), found in Arabidopsis thaliana (Mouse-ear cress).